We begin with the raw amino-acid sequence, 124 residues long: Small ribosomal subunit protein uS13 (124 aa).

The tract at residues 99–124 (RGQRTRTNARTRKGPRKTVGVMRKKS) is disordered. The span at 101–124 (QRTRTNARTRKGPRKTVGVMRKKS) shows a compositional bias: basic residues.

It belongs to the universal ribosomal protein uS13 family. As to quaternary structure, part of the 30S ribosomal subunit. Forms a loose heterodimer with protein S19. Forms two bridges to the 50S subunit in the 70S ribosome.

Located at the top of the head of the 30S subunit, it contacts several helices of the 16S rRNA. In the 70S ribosome it contacts the 23S rRNA (bridge B1a) and protein L5 of the 50S subunit (bridge B1b), connecting the 2 subunits; these bridges are implicated in subunit movement. Contacts the tRNAs in the A and P-sites. In Caldicellulosiruptor bescii (strain ATCC BAA-1888 / DSM 6725 / KCTC 15123 / Z-1320) (Anaerocellum thermophilum), this protein is Small ribosomal subunit protein uS13.